A 627-amino-acid polypeptide reads, in one-letter code: (+)-3-carene synthase 1, chloroplastic (627 aa).

The N-terminal 36 residues, 1–36, are a transit peptide targeting the chloroplast; sequence MSVISIVPLASKPCLYKSFISSTHEPKALRRPISTV. Mg(2+)-binding residues include D378, D382, and D530. Residues 378 to 382 carry the DDXXD motif motif; it reads DDMYD.

It belongs to the terpene synthase family. Tpsd subfamily. It depends on Mg(2+) as a cofactor. Mn(2+) is required as a cofactor.

The protein localises to the plastid. It is found in the chloroplast. The enzyme catalyses (2E)-geranyl diphosphate = (+)-car-3-ene + diphosphate. The protein operates within terpene metabolism; oleoresin biosynthesis. Functionally, terpene synthase (TPS) involved in the biosynthesis of monoterpene natural products included in conifer oleoresin secretions and volatile emissions; these compounds contribute to biotic and abiotic stress defense against herbivores (e.g. insect attack by white pine weevil P.strobi) and pathogens. Catalyzes the conversion of (2E)-geranyl diphosphate (GPP) to (+)-car-3-ene. The protein is (+)-3-carene synthase 1, chloroplastic of Picea sitchensis (Sitka spruce).